A 401-amino-acid chain; its full sequence is Rho-N domain-containing protein 1, chloroplastic (401 aa).

Residues 1–63 constitute a chloroplast transit peptide; sequence MAMSGTFHLT…VPNRSSFVCR (63 aa). 2 disordered regions span residues 73–129 and 180–361; these read PDFS…PGPR and KHSG…EEAV. Polar residues-rich tracts occupy residues 102–126, 210–223, and 240–265; these read DMLSSRNGPLFNLSSSPKFQATSSP, TGNLVTSGNKDNNA, and PRSQSPPAYSSEATFDQSSSYSVTWT. Residues 266–290 show a composition bias toward basic and acidic residues; that stretch reads QKKDTVELHDEPEHEPAYEHEHEPE. Residues 339-358 are compositionally biased toward acidic residues; it reads LSDDDESLDDADEDSDEAEE. Residues 339-371 adopt a coiled-coil conformation; it reads LSDDDESLDDADEDSDEAEEEAVKDLSELKLVE.

In terms of assembly, homodimer or homomultimer. Part of a chloroplastic degradosome-like complex. Interacts with RNE.

The protein localises to the plastid. It is found in the chloroplast. Binds to and supports processing of specific plastid RNAs. Associates via its C-terminal Rho-N domain to single stranded regions of 16S and 23S rRNAs or to rbcL mRNAs. May be involved in targeting transcripts to RNases such as RNE or RNase J. This Arabidopsis thaliana (Mouse-ear cress) protein is Rho-N domain-containing protein 1, chloroplastic (RHON1).